A 241-amino-acid polypeptide reads, in one-letter code: Endonuclease NucS (241 aa).

Belongs to the NucS endonuclease family.

It is found in the cytoplasm. Functionally, cleaves both 3' and 5' ssDNA extremities of branched DNA structures. In Corynebacterium jeikeium (strain K411), this protein is Endonuclease NucS.